The sequence spans 478 residues: Glycogen synthase (478 aa).

Lys15 contributes to the ADP-alpha-D-glucose binding site.

This sequence belongs to the glycosyltransferase 1 family. Bacterial/plant glycogen synthase subfamily.

The catalysed reaction is [(1-&gt;4)-alpha-D-glucosyl](n) + ADP-alpha-D-glucose = [(1-&gt;4)-alpha-D-glucosyl](n+1) + ADP + H(+). It functions in the pathway glycan biosynthesis; glycogen biosynthesis. Its function is as follows. Synthesizes alpha-1,4-glucan chains using ADP-glucose. The protein is Glycogen synthase of Bacillus cytotoxicus (strain DSM 22905 / CIP 110041 / 391-98 / NVH 391-98).